The sequence spans 598 residues: Vacuolin-A (598 aa).

The stretch at 482-539 (IKTTEARLKAETDNIALEQRNKAIISESQAKLSSAQREAESLLITAEAQKKASELQGE) forms a coiled coil.

This sequence belongs to the vacuolin family.

It localises to the endosome membrane. It is found in the lysosome. This chain is Vacuolin-A (vacA), found in Dictyostelium discoideum (Social amoeba).